Reading from the N-terminus, the 157-residue chain is Small ribosomal subunit protein uS7 (157 aa).

Belongs to the universal ribosomal protein uS7 family. As to quaternary structure, part of the 30S ribosomal subunit. Contacts proteins S9 and S11.

In terms of biological role, one of the primary rRNA binding proteins, it binds directly to 16S rRNA where it nucleates assembly of the head domain of the 30S subunit. Is located at the subunit interface close to the decoding center, probably blocks exit of the E-site tRNA. The protein is Small ribosomal subunit protein uS7 of Eikenella corrodens.